We begin with the raw amino-acid sequence, 284 residues long: Bifunctional protein FolD (284 aa).

NADP(+)-binding positions include 166–168 (GAS) and I232.

Belongs to the tetrahydrofolate dehydrogenase/cyclohydrolase family. As to quaternary structure, homodimer.

The enzyme catalyses (6R)-5,10-methylene-5,6,7,8-tetrahydrofolate + NADP(+) = (6R)-5,10-methenyltetrahydrofolate + NADPH. It catalyses the reaction (6R)-5,10-methenyltetrahydrofolate + H2O = (6R)-10-formyltetrahydrofolate + H(+). Its pathway is one-carbon metabolism; tetrahydrofolate interconversion. Functionally, catalyzes the oxidation of 5,10-methylenetetrahydrofolate to 5,10-methenyltetrahydrofolate and then the hydrolysis of 5,10-methenyltetrahydrofolate to 10-formyltetrahydrofolate. The sequence is that of Bifunctional protein FolD from Pseudomonas putida (strain W619).